We begin with the raw amino-acid sequence, 244 residues long: Nicotinamidase 1 (244 aa).

It belongs to the isochorismatase family. As to expression, expressed in roots and stems, and at lower levels in flowers, siliques and leaves.

It catalyses the reaction nicotinamide + H2O = nicotinate + NH4(+). The protein operates within cofactor biosynthesis; nicotinate biosynthesis; nicotinate from nicotinamide: step 1/1. Catalyzes the deamidation of nicotinamide, an early step in the NAD(+) salvage pathway. Prevents the accumulation of intracellular nicotinamide, a known inhibitor of poly(ADP-ribose) polymerases (PARP enzymes). The chain is Nicotinamidase 1 from Arabidopsis thaliana (Mouse-ear cress).